A 296-amino-acid polypeptide reads, in one-letter code: Sperm-activating peptides (296 aa).

3 propeptides span residues 1 to 134, 146 to 190, and 290 to 296; these read MPPG…MYKK, MLSN…MILK, and EVEIKDW.

Its function is as follows. Causes stimulation of sperm respiration and motility through intracellular alkalinization, transient elevations of cAMP, cGMP and calcium levels in sperm cells, and transient activation and subsequent inactivation of the membrane form of guanylate cyclase. The protein is Sperm-activating peptides of Strongylocentrotus purpuratus (Purple sea urchin).